A 124-amino-acid polypeptide reads, in one-letter code: Fluoride-specific ion channel FluC 1 (124 aa).

The next 4 membrane-spanning stretches (helical) occupy residues 1–21 (MCAV…ALGA), 30–50 (LWPG…LLGY), 64–84 (FLGV…VDAV), and 93–113 (LYVV…MLAG). Na(+) is bound by residues Gly71 and Thr74.

Belongs to the fluoride channel Fluc/FEX (TC 1.A.43) family.

The protein localises to the cell membrane. The enzyme catalyses fluoride(in) = fluoride(out). Na(+) is not transported, but it plays an essential structural role and its presence is essential for fluoride channel function. Fluoride-specific ion channel. Important for reducing fluoride concentration in the cell, thus reducing its toxicity. This Rhodococcus jostii (strain RHA1) protein is Fluoride-specific ion channel FluC 1.